We begin with the raw amino-acid sequence, 86 residues long: Putative membrane protein insertion efficiency factor (86 aa).

It belongs to the UPF0161 family.

It is found in the cell inner membrane. In terms of biological role, could be involved in insertion of integral membrane proteins into the membrane. The sequence is that of Putative membrane protein insertion efficiency factor from Mannheimia succiniciproducens (strain KCTC 0769BP / MBEL55E).